We begin with the raw amino-acid sequence, 243 residues long: Carboxy-S-adenosyl-L-methionine synthase (243 aa).

Residues Tyr40, Gly65–Ser67, Asp90–Asn91, Asp118–Ile119, Asn133, and Arg200 contribute to the S-adenosyl-L-methionine site.

Belongs to the class I-like SAM-binding methyltransferase superfamily. Cx-SAM synthase family. As to quaternary structure, homodimer.

The enzyme catalyses prephenate + S-adenosyl-L-methionine = carboxy-S-adenosyl-L-methionine + 3-phenylpyruvate + H2O. Functionally, catalyzes the conversion of S-adenosyl-L-methionine (SAM) to carboxy-S-adenosyl-L-methionine (Cx-SAM). The chain is Carboxy-S-adenosyl-L-methionine synthase from Shewanella putrefaciens (strain CN-32 / ATCC BAA-453).